The following is a 733-amino-acid chain: Two pore calcium channel protein 1 (733 aa).

Position 1 is an N-acetylmethionine (methionine 1). The Cytoplasmic portion of the chain corresponds to 1–71; the sequence is MEDPLIGRDS…RYYFIFTRLD (71 aa). Residues 72–92 traverse the membrane as a helical segment; the sequence is LIWSLNYFALLFLNFFEQPLW. The Vacuolar portion of the chain corresponds to 93 to 120; it reads CEKNPKPSCKDRDYYYLGELPYLTNAES. Residues 121–141 traverse the membrane as a helical segment; sequence IIYEVITLAILLVHTFFPISY. The Cytoplasmic segment spans residues 142–158; it reads EGSRIFWTSRLNLVKVA. Residues 159-179 traverse the membrane as a helical segment; that stretch reads CVVILFVDVLVDFLYLSPLAF. A topological domain (vacuolar) is located at residue aspartate 180. Residues 181–199 form a helical; Voltage-sensor membrane-spanning segment; the sequence is FLPFRIAPYVRVIIFILSI. At 200 to 218 the chain is on the cytoplasmic side; the sequence is RELRDTLVLLSGMLGTYLN. Residues 219 to 239 form a helical membrane-spanning segment; that stretch reads ILALWMLFLLFASWIAFVMFE. Residues 240–245 lie on the Vacuolar side of the membrane; sequence DTQQGL. An intramembrane region (pore-forming) is located at residues 246-260; sequence TVFTSYGATLYQMFI. Residues 261–282 are Vacuolar-facing; sequence LFTTSNNPDVWIPAYKSSRWSS. The chain crosses the membrane as a helical span at residues 283–303; sequence VFFVLYVLIGVYFVTNLILAV. Over 304–428 the chain is Cytoplasmic; it reads VYDSFKEQLA…LSQQLRAFVR (125 aa). 2 EF-hand domains span residues 322 to 357 and 363 to 398; these read MKRR…LTNY and ISKE…IALR. A helical membrane pass occupies residues 429-449; that stretch reads SPNFGYAISFILIINFIAVVV. Residues 450–465 are Vacuolar-facing; that stretch reads ETTLDIEESSAQKPWQ. A helical membrane pass occupies residues 466-486; that stretch reads VAEFVFGWIYVLEMALKIYTY. Residues 487–498 lie on the Cytoplasmic side of the membrane; it reads GFENYWREGANR. A helical membrane pass occupies residues 499–519; the sequence is FDFLVTWVIVIGETATFITPD. The Vacuolar segment spans residues 520 to 528; sequence ENTFFSNGE. Residues 529-546 form a helical; Voltage-sensor membrane-spanning segment; sequence WIRYLLLARMLRLIRLLM. At 547 to 557 the chain is on the cytoplasmic side; it reads NVQRYRAFIAT. The helical transmembrane segment at 558–578 threads the bilayer; that stretch reads FITLIPSLMPYLGTIFCVLCI. Residues 579-615 lie on the Vacuolar side of the membrane; the sequence is YCSIGVQVFGGLVNAGNKKLFETELAEDDYLLFNFND. An intramembrane region (pore-forming) is located at residues 616–630; sequence YPNGMVTLFNLLVMG. At 631–651 the chain is on the vacuolar side; sequence NWQVWMESYKDLTGTWWSITY. Residues 652-672 form a helical membrane-spanning segment; that stretch reads FVSFYVITILLLLNLVVAFVL. The Cytoplasmic segment spans residues 673 to 733; sequence EAFFTELDLE…SKPECSTSDT (61 aa). Positions 686–695 are enriched in basic and acidic residues; sequence KCQGQDSQEK. The tract at residues 686–711 is disordered; sequence KCQGQDSQEKRNRRRSAGSKSRSQRV.

It belongs to the calcium channel alpha-1 subunit (TC 1.A.1.11) family. Two pore calcium channel subfamily. As to quaternary structure, homodimer. Ubiquitously expressed.

Its subcellular location is the vacuole membrane. Inhibited by Al(3+). Functionally, functions as a voltage-gated inward-rectifying Ca(2+) channel (VDCC) across the vacuole membrane. Is one of the essential components of the slow vacuolar (SV) channel. Acts as the major ROS-responsive Ca(2+) channel and is the possible target of Al-dependent inhibition. Involved in the regulation of germination and stomatal movement. This Arabidopsis thaliana (Mouse-ear cress) protein is Two pore calcium channel protein 1 (TPC1).